Here is a 128-residue protein sequence, read N- to C-terminus: Iron-sulfur cluster insertion protein ErpA (128 aa).

Iron-sulfur cluster is bound by residues C56, C120, and C122.

The protein belongs to the HesB/IscA family. Homodimer. It depends on iron-sulfur cluster as a cofactor.

Functionally, required for insertion of 4Fe-4S clusters for at least IspG. In Xanthomonas axonopodis pv. citri (strain 306), this protein is Iron-sulfur cluster insertion protein ErpA.